The chain runs to 384 residues: Tetraacyldisaccharide 4'-kinase (384 aa).

72 to 79 contributes to the ATP binding site; the sequence is TAGGTGKT.

This sequence belongs to the LpxK family.

It catalyses the reaction a lipid A disaccharide + ATP = a lipid IVA + ADP + H(+). The protein operates within glycolipid biosynthesis; lipid IV(A) biosynthesis; lipid IV(A) from (3R)-3-hydroxytetradecanoyl-[acyl-carrier-protein] and UDP-N-acetyl-alpha-D-glucosamine: step 6/6. Functionally, transfers the gamma-phosphate of ATP to the 4'-position of a tetraacyldisaccharide 1-phosphate intermediate (termed DS-1-P) to form tetraacyldisaccharide 1,4'-bis-phosphate (lipid IVA). The polypeptide is Tetraacyldisaccharide 4'-kinase (Halothermothrix orenii (strain H 168 / OCM 544 / DSM 9562)).